The following is a 186-amino-acid chain: Membrane protein Rv1476 (186 aa).

The helical transmembrane segment at 138 to 158 (FPWSALTIVLLIGVLAAAVGA) threads the bilayer. The segment at 166 to 186 (RRSATSTDAAPGAGDDLNQGV) is disordered.

It localises to the membrane. In terms of biological role, may affect the expression of genes linked to host macrophage apoptosis and immune response, thereby promoting the survival of M.tuberculosis in host macrophages. Overexpression of the gene increases susceptibility of the bacteria to various stresses, but promotes intracellular survival in host macrophages. It has no impact on the growth rate in vitro. Overexpression causes changes in the transcriptome of THP-1 cells, including expression of genes involved in cell proliferation, fatty acid degradation, cytokine-cytokine receptor interaction and immune response pathways. This Mycobacterium tuberculosis (strain ATCC 25618 / H37Rv) protein is Membrane protein Rv1476.